The following is a 600-amino-acid chain: MSRVAKYRRQVSEDPDIDSLLETLSPEEMEELEKELDVVDPDGSVPVGLRQRNQTEKQSTGVYNREAMLNFCEKETKKLMQREMSMDESKQVETKTDAKNGEERGRDASKKALGPRRDSDLGKEPKRGGLKKSFSRDRDEAGGKSGEKPKEEKIIRGIDKGRVRAAVDKKEAGKDGRGEERAVATKKEEEKKGSDRNTGLSRDKDKKREEMKEVAKKEDDEKVKGERRNTDTRKEGEKMKRAGGNTDMKKEDEKVKRGTGNTDTKKDDEKVKKNEPLHEKEAKDDSKTKTPEKQTPSGPTKPSEGPAKVEEEAAPSIFDEPLERVKNNDPEMTEVNVNNSDCITNEILVRFTEALEFNTVVKLFALANTRADDHVAFAIAIMLKANKTITSLNLDSNHITGKGILAIFRALLQNNTLTELRFHNQRHICGGKTEMEIAKLLKENTTLLKLGYHFELAGPRMTVTNLLSRNMDKQRQKRLQEQRQAQEAKGEKKDLLEVPKAGAVAKGSPKPSPQPSPKPSPKNSPKKGGAPAAPPPPPPPLAPPLIMENLKNSLSPATQRKMGDKVLPAQEKNSRDQLLAAIRSSNLKQLKKVEVPKLLQ.

Ser-12 bears the Phosphoserine mark. Disordered regions lie at residues 38 to 61 (VVDPDGSVPVGLRQRNQTEKQSTG), 80 to 324 (MQRE…PLER), and 472 to 573 (DKQR…QEKN). Basic and acidic residues-rich tracts occupy residues 80–127 (MQRE…EPKR), 134–240 (FSRD…EKMK), 247–256 (DMKKEDEKVK), 263–292 (DTKKDDEKVKKNEPLHEKEAKDDSKTKTPE), and 472–497 (DKQRQKRLQEQRQAQEAKGEKKDLLE). Ser-85 and Ser-135 each carry phosphoserine. 8 repeat units span residues 165–180 (AAVDKKEAGKDGRGEE), 181–196 (RAVATKKEEEKKGSDR), 197–212 (NTGLSRDKDKKREEMK), 213–228 (EVAKKEDDEKVKGERR), 229–244 (NTDTRKEGEKMKRAGG), 245–260 (NTDMKKEDEKVKRGTG), 261–276 (NTDTKKDDEKVKKNEP), and 277–293 (LHEKEAKDDSKTKTPEK). The tract at residues 165–293 (AAVDKKEAGK…DDSKTKTPEK (129 aa)) is 8 X approximate tandem repeats. Positions 508 to 527 (SPKPSPQPSPKPSPKNSPKK) are 5 X 4 AA approximate tandem repeats. Pro residues-rich tracts occupy residues 510–522 (KPSPQPSPKPSPK) and 532–543 (AAPPPPPPPLAP). Phosphoserine is present on Ser-555. The WH2 domain maps to 574–593 (SRDQLLAAIRSSNLKQLKKV).

The protein belongs to the tropomodulin family. In terms of tissue distribution, detected in lung vascular smooth muscle (at protein level). Detected in thyroid and extraocular smooth muscle, but not skeletal muscle. Detected in heart, aorta, skeletal muscle, colon, urinary bladder, uterus, stomach, and small intestine.

The protein localises to the cytoplasm. The protein resides in the myofibril. It is found in the sarcomere. Its subcellular location is the cytoskeleton. In terms of biological role, required for proper contractility of visceral smooth muscle cells. Mediates nucleation of actin filaments. In Homo sapiens (Human), this protein is Leiomodin-1 (LMOD1).